The following is a 108-amino-acid chain: UPF0145 protein sll118 (108 aa).

The protein belongs to the UPF0145 family.

This is UPF0145 protein sll118 from Synechocystis sp. (strain ATCC 27184 / PCC 6803 / Kazusa).